A 739-amino-acid polypeptide reads, in one-letter code: Protein kinase C (739 aa).

A C2 domain is found at 1 to 117; the sequence is MFTGKLQIKV…SETAVQDLWV (117 aa). 2 Phorbol-ester/DAG-type zinc fingers span residues 176 to 226 and 251 to 301; these read GHKF…VSKC and PHRF…ANTC. The 258-residue stretch at 408–665 folds into the Protein kinase domain; the sequence is FNFIKVLGKG…ENEIRKHPFF (258 aa). Residues 414 to 422 and Lys-437 each bind ATP; that span reads LGKGSFGKV. Asp-532 serves as the catalytic Proton acceptor. The 72-residue stretch at 666–737 folds into the AGC-kinase C-terminal domain; it reads AKLDWKELEK…VNPKFGPERK (72 aa).

This sequence belongs to the protein kinase superfamily. AGC Ser/Thr protein kinase family. PKC subfamily.

The enzyme catalyses L-seryl-[protein] + ATP = O-phospho-L-seryl-[protein] + ADP + H(+). It catalyses the reaction L-threonyl-[protein] + ATP = O-phospho-L-threonyl-[protein] + ADP + H(+). In terms of biological role, PKC is activated by diacylglycerol which in turn phosphorylates a range of cellular proteins. PKC also serves as the receptor for phorbol esters, a class of tumor promoters. This chain is Protein kinase C (Pkc98E), found in Drosophila melanogaster (Fruit fly).